The following is a 370-amino-acid chain: Sodium-dependent organic anion transporter (370 aa).

Residues 1 to 24 (MSADCEGNSTCPANSTEEDPPVGM) are disordered. Topologically, residues 1–32 (MSADCEGNSTCPANSTEEDPPVGMEGQGSLKL) are extracellular. N-linked (GlcNAc...) asparagine glycosylation is found at asparagine 8 and asparagine 14. Residues 33–53 (VFTVLSAVMVGLVMFSFGCSV) form a helical membrane-spanning segment. Residues 54 to 67 (ESRKLWLHLRRPWG) are Cytoplasmic-facing. Residues 68-88 (IAVGLLCQFGLMPLTAYLLAI) form a helical membrane-spanning segment. The Extracellular portion of the chain corresponds to 89–97 (GFGLKPFQA). A helical transmembrane segment spans residues 98–118 (IAVLIMGSCPGGTVSNVLTFW). At 119 to 126 (VDGDMDLS) the chain is on the cytoplasmic side. Residues 127–147 (ISMTTCSTVAALGMMPLCLYV) form a helical membrane-spanning segment. Topologically, residues 148 to 159 (YTRSWTLPQSLT) are extracellular. A helical membrane pass occupies residues 160-180 (IPYQSIGITLVSLVVPVASGI). Residues 181-195 (YVNYRWPKQATFILK) are Cytoplasmic-facing. A helical membrane pass occupies residues 196-216 (VGAAVGGMLLLVVAVTGVVLA). Residues 217–224 (KGWNIDVT) lie on the Extracellular side of the membrane. The helical transmembrane segment at 225 to 245 (LLVISCIFPLVGHVMGFLLAF) threads the bilayer. Over 246–265 (LTHQSWQRCRTISIETGAQN) the chain is Cytoplasmic. A helical membrane pass occupies residues 266 to 283 (IQLCIAMMQLSFSAEYLV). Glutamine 284 is a topological domain (extracellular). A helical transmembrane segment spans residues 285-305 (LLNFALAYGLFQVLHGLLIVA). At 306-370 (AYQAYKRRQK…ELTSHVPSCE (65 aa)) the chain is on the cytoplasmic side.

Belongs to the bile acid:sodium symporter (BASS) (TC 2.A.28) family. Post-translationally, glycosylated. As to expression, highly expressed in heart, lung, spleen and adrenal gland. Moderately expressed in skeletal muscle, testis and small intestine.

It localises to the membrane. The enzyme catalyses estrone 3-sulfate(out) + 2 Na(+)(out) = estrone 3-sulfate(in) + 2 Na(+)(in). It carries out the reaction 17beta-estradiol 3-sulfate(out) + 2 Na(+)(out) = 17beta-estradiol 3-sulfate(in) + 2 Na(+)(in). It catalyses the reaction dehydroepiandrosterone 3-sulfate(out) + 2 Na(+)(out) = dehydroepiandrosterone 3-sulfate(in) + 2 Na(+)(in). The catalysed reaction is androst-5-ene-diol 3-sulfate(out) + 2 Na(+)(out) = androst-5-ene-diol 3-sulfate(in) + 2 Na(+)(in). The enzyme catalyses pregnenolone sulfate(out) + 2 Na(+)(out) = pregnenolone sulfate(in) + 2 Na(+)(in). It carries out the reaction taurolithocholate 3-sulfate(out) + 2 Na(+)(out) = taurolithocholate 3-sulfate(in) + 2 Na(+)(in). It catalyses the reaction androsterone 3alpha-sulfate(out) + 2 Na(+)(out) = androsterone 3alpha-sulfate(in) + 2 Na(+)(in). The catalysed reaction is 5alpha-dihydrotestosterone sulfate(out) + 2 Na(+)(out) = 5alpha-dihydrotestosterone sulfate(in) + 2 Na(+)(in). The enzyme catalyses 17beta-estradiol 17-sulfate(out) + 2 Na(+)(out) = 17beta-estradiol 17-sulfate(in) + 2 Na(+)(in). It carries out the reaction 17alpha-hydroxypregnenolone 3-sulfate(out) + 2 Na(+)(out) = 17alpha-hydroxypregnenolone 3-sulfate(in) + 2 Na(+)(in). It catalyses the reaction epiandrosterone 3-sulfate(out) + 2 Na(+)(out) = epiandrosterone 3-sulfate(in) + 2 Na(+)(in). The catalysed reaction is epitestosterone 17-sulfate(out) + 2 Na(+)(out) = epitestosterone 17-sulfate(in) + 2 Na(+)(in). The enzyme catalyses testosterone 17-sulfate(out) + 2 Na(+)(out) = testosterone 17-sulfate(in) + 2 Na(+)(in). It carries out the reaction 16alpha-hydroxydehydroepiandrosterone 3-sulfate(out) + 2 Na(+)(out) = 16alpha-hydroxydehydroepiandrosterone 3-sulfate(in) + 2 Na(+)(in). Functionally, transports sulfoconjugated steroid hormones from the extracellular compartment into the cytosol in a sodium-dependent manner without hydrolysis. Steroid sulfate hormones are commonly considered to be biologically inactive metabolites, that may be activated by steroid sulfatases into free steroids. May play an important role by delivering sulfoconjugated steroids to specific target cells in reproductive organs. May play a role transporting the estriol precursor 16alpha-hydroxydehydroepiandrosterone 3-sulfate (16a-OH-DHEAS) at the fetal blood vessel endothelium. Can also transport other sulfoconjugated molecules such as taurolithocholic acid-3-sulfate and sulfoconjugated pyrenes. The protein is Sodium-dependent organic anion transporter (Slc10a6) of Rattus norvegicus (Rat).